The chain runs to 165 residues: Large ribosomal subunit protein uL10 (165 aa).

It belongs to the universal ribosomal protein uL10 family. As to quaternary structure, part of the ribosomal stalk of the 50S ribosomal subunit. The N-terminus interacts with L11 and the large rRNA to form the base of the stalk. The C-terminus forms an elongated spine to which L12 dimers bind in a sequential fashion forming a multimeric L10(L12)X complex.

In terms of biological role, forms part of the ribosomal stalk, playing a central role in the interaction of the ribosome with GTP-bound translation factors. The chain is Large ribosomal subunit protein uL10 from Borrelia turicatae (strain 91E135).